The primary structure comprises 319 residues: Eukaryotic translation initiation factor 3 subunit H (319 aa).

An MPN domain is found at 19–153; the sequence is VQIDGLVVLK…LKCYRLTQSF (135 aa).

The protein belongs to the eIF-3 subunit H family. As to quaternary structure, component of the eukaryotic translation initiation factor 3 (eIF-3) complex.

It localises to the cytoplasm. Component of the eukaryotic translation initiation factor 3 (eIF-3) complex, which is involved in protein synthesis of a specialized repertoire of mRNAs and, together with other initiation factors, stimulates binding of mRNA and methionyl-tRNAi to the 40S ribosome. The eIF-3 complex specifically targets and initiates translation of a subset of mRNAs involved in cell proliferation. The protein is Eukaryotic translation initiation factor 3 subunit H (eif3H) of Dictyostelium discoideum (Social amoeba).